We begin with the raw amino-acid sequence, 103 residues long: MVRYRTRSLSERPHEVHGQQVHGQDQGHNGQEEQGLSPEHVEVYERTHQGHSHHRRRRCSQRRLHRIHRRRHRSCRRRRRRSCRHRRRHRRGCRTRRRRCRRY.

The segment at 1-103 (MVRYRTRSLS…RTRRRRCRRY (103 aa)) is disordered. 2 positions are modified to phosphoserine: Ser8 and Ser10. Basic and acidic residues predominate over residues 8 to 17 (SLSERPHEVH). Positions 18 to 29 (GQQVHGQDQGHN) are enriched in low complexity. Ser37 is modified (phosphoserine). The segment covering 39–48 (EHVEVYERTH) has biased composition (basic and acidic residues). A compositionally biased stretch (basic residues) spans 49 to 103 (QGHSHHRRRRCSQRRLHRIHRRRHRSCRRRRRRSCRHRRRHRRGCRTRRRRCRRY).

Belongs to the protamine P2 family. As to quaternary structure, interacts with TDRP. In terms of processing, proteolytic processing into mature chains is required for histone eviction during spermatogenesis. Transition proteins (TNP1 and TNP2) are required for processing. As to expression, testis.

The protein resides in the nucleus. The protein localises to the chromosome. Protamines substitute for histones in the chromatin of sperm during the haploid phase of spermatogenesis. They compact sperm DNA into a highly condensed, stable and inactive complex. The sequence is that of Protamine-2 (PRM2) from Erythrocebus patas (Red guenon).